A 373-amino-acid polypeptide reads, in one-letter code: P2Y purinoceptor 1 (373 aa).

At M1–F51 the chain is on the extracellular side. 2 N-linked (GlcNAc...) asparagine glycosylation sites follow: N11 and N27. 2 disulfide bridges follow: C42–C296 and C124–C202. K46 contacts ADP. The helical transmembrane segment at Y52–W74 threads the bilayer. The Cytoplasmic portion of the chain corresponds to M75–S87. The helical transmembrane segment at V88–F109 threads the bilayer. Topologically, residues Y110–K125 are extracellular. N113 carries N-linked (GlcNAc...) asparagine glycosylation. A helical membrane pass occupies residues L126 to A147. At H148–K166 the chain is on the cytoplasmic side. Residues N167–F188 traverse the membrane as a helical segment. Residues Y189–Y214 are Extracellular-facing. N197 is a glycosylation site (N-linked (GlcNAc...) asparagine). Y203–T205 contacts ADP. The chain crosses the membrane as a helical span at residues F215–Y237. At G238–Y260 the chain is on the cytoplasmic side. Residues L261–L284 traverse the membrane as a helical segment. ADP-binding positions include N283–R287, Y303–Y306, and R310. Over R285–Y303 the chain is Extracellular. The chain crosses the membrane as a helical span at residues A304–F325. Residues L326 to L373 are Cytoplasmic-facing.

The protein belongs to the G-protein coupled receptor 1 family.

Its subcellular location is the cell membrane. With respect to regulation, ATP functions as antagonist and inhibits ADP-induced mobilization of Ca(2+). The P2Y1 receptor-specific antagonists A3P5PS, A3P5P and A2P5P inhibit downstream signaling mediated by mobilization of Ca(2+) from intracellular stores, and platelet shape changes in response to extracellular ADP. Its function is as follows. Receptor for extracellular adenine nucleotides such as ADP. In platelets, binding to ADP leads to mobilization of intracellular calcium ions via activation of phospholipase C, a change in platelet shape, and ultimately platelet aggregation. This is P2Y purinoceptor 1 (P2RY1) from Homo sapiens (Human).